The primary structure comprises 1254 residues: DNA-directed RNA polymerase subunit beta' (1254 aa).

Residues cysteine 59, cysteine 61, cysteine 76, and cysteine 79 each contribute to the Zn(2+) site. Mg(2+) contacts are provided by aspartate 501, aspartate 503, and aspartate 505. Cysteine 871, cysteine 946, cysteine 953, and cysteine 956 together coordinate Zn(2+).

Belongs to the RNA polymerase beta' chain family. In terms of assembly, the RNAP catalytic core consists of 2 alpha, 1 beta, 1 beta' and 1 omega subunit. When a sigma factor is associated with the core the holoenzyme is formed, which can initiate transcription. Requires Mg(2+) as cofactor. Zn(2+) is required as a cofactor.

It catalyses the reaction RNA(n) + a ribonucleoside 5'-triphosphate = RNA(n+1) + diphosphate. In terms of biological role, DNA-dependent RNA polymerase catalyzes the transcription of DNA into RNA using the four ribonucleoside triphosphates as substrates. In Mesoplasma florum (strain ATCC 33453 / NBRC 100688 / NCTC 11704 / L1) (Acholeplasma florum), this protein is DNA-directed RNA polymerase subunit beta'.